A 1325-amino-acid chain; its full sequence is Protein PHYTOCHROME-DEPENDENT LATE-FLOWERING (1325 aa).

2 stretches are compositionally biased toward polar residues: residues 313-331 and 504-515; these read IGSTRNTQDQGSNSVSVSG and NFPQTSWNVNPG. Disordered regions lie at residues 313-371, 462-558, 593-616, 852-875, and 1160-1325; these read IGST…MPGL, EPFE…EFSG, ANEAMQQRQHQAQMAAKRRTNSLP, VAGQASGEASKHGNTGNTPNNSTQ, and QQQQ…GNNS. Residues 518–529 show a composition bias toward basic and acidic residues; it reads IEKEPKKEEQFS. Residues 596–607 show a composition bias toward low complexity; it reads AMQQRQHQAQMA. The segment covering 863 to 875 has biased composition (polar residues); sequence HGNTGNTPNNSTQ. Positions 1160–1224 are enriched in low complexity; sequence QQQQQQQLQQ…QQQATASPLQ (65 aa). Residues 1225–1239 show a composition bias toward polar residues; it reads SVLSPPQVGSPSAGI. Positions 1240–1262 are enriched in low complexity; sequence TQQQLQQSSPQQMSQRTPMSPQQ. 2 stretches are compositionally biased toward polar residues: residues 1263 to 1286 and 1293 to 1325; these read VNQRTPMSPQISSGAMHPMSTSNL and PQLSSQTMGSVGSITNSPMELQGPKNNSAGNNS.

As to quaternary structure, component of a red light-dependent nuclear complex made of PHL, PHYB and CO. Interacts directly with PHYB and CO; CO binding requires the presence of PHYB. In terms of tissue distribution, mostly expressed in cotyledons and leaves, both in mesophyll and vasculature cells. Also present in roots, hypocotyls and shoot apices.

The protein localises to the nucleus. It localises to the nuclear body. Its subcellular location is the cytoplasmic granule. The protein resides in the cytoplasm. Its function is as follows. Triggers photoperiod-monitored flowering by repressing PHYB-dependent flowering negative regulation, probably through physical interactions with PHYB and CO. The chain is Protein PHYTOCHROME-DEPENDENT LATE-FLOWERING from Arabidopsis thaliana (Mouse-ear cress).